A 513-amino-acid polypeptide reads, in one-letter code: ATP synthase subunit alpha (513 aa).

Residue 169 to 176 participates in ATP binding; that stretch reads GDRQCGKT.

Belongs to the ATPase alpha/beta chains family. As to quaternary structure, F-type ATPases have 2 components, CF(1) - the catalytic core - and CF(0) - the membrane proton channel. CF(1) has five subunits: alpha(3), beta(3), gamma(1), delta(1), epsilon(1). CF(0) has three main subunits: a(1), b(2) and c(9-12). The alpha and beta chains form an alternating ring which encloses part of the gamma chain. CF(1) is attached to CF(0) by a central stalk formed by the gamma and epsilon chains, while a peripheral stalk is formed by the delta and b chains.

It localises to the cell inner membrane. It catalyses the reaction ATP + H2O + 4 H(+)(in) = ADP + phosphate + 5 H(+)(out). Functionally, produces ATP from ADP in the presence of a proton gradient across the membrane. The alpha chain is a regulatory subunit. The protein is ATP synthase subunit alpha of Burkholderia mallei (strain NCTC 10229).